Reading from the N-terminus, the 707-residue chain is Choline transporter-like protein 4 (707 aa).

Over 1–33 (MGGKQDQDKEAYGKPAKYDPSFRGPIRNRSCTD) the chain is Cytoplasmic. A helical membrane pass occupies residues 34–54 (IICCVLFFLFILGYIAVGILA). The Extracellular portion of the chain corresponds to 55–227 (WVYGDPKQVL…KIFEDFAQSW (173 aa)). Residues asparagine 68, asparagine 185, and asparagine 196 are each glycosylated (N-linked (GlcNAc...) asparagine). The chain crosses the membrane as a helical span at residues 228–248 (YWILIALGLALVLSLLFILLL). The Cytoplasmic segment spans residues 249-250 (RL). A helical membrane pass occupies residues 251 to 271 (VAGPLVFVLIIGVLGVLAYGI). Residues 272-307 (YHCWEEYRVLRDKGASISQLGFTTNLSAYRNVQETW) lie on the Extracellular side of the membrane. Residue asparagine 296 is glycosylated (N-linked (GlcNAc...) asparagine). The helical transmembrane segment at 308–328 (LAALIILAVLEGVLLLMLIFL) threads the bilayer. Over 329-356 (RQRICIAIALLKEASRAVGYIMSTMFYP) the chain is Cytoplasmic. Residues 357–377 (LVTFALLLVCIAYWAIIALFL) form a helical membrane-spanning segment. At 378 to 452 (ATSGQPQYVF…AVLGLFWTIN (75 aa)) the chain is on the extracellular side. N-linked (GlcNAc...) asparagine glycosylation is found at asparagine 391, asparagine 403, and asparagine 413. Residues 453 to 473 (WVLALGQCVLAGAFASFYWAF) form a helical membrane-spanning segment. The Cytoplasmic portion of the chain corresponds to 474 to 498 (HKPRDIPTFPLGSAFLRTLRYHTGS). Residues 499-519 (LAFGALILTLVQIARVILEYI) traverse the membrane as a helical segment. Residues 520–557 (DHKLRGAQNPLTRCILCCFKCCLWCLEKFIKFLNRNAY) are Extracellular-facing. A helical transmembrane segment spans residues 558 to 578 (IMIAIYGKNFCVSAKNAFMLL). The Cytoplasmic segment spans residues 579–594 (MRNIVRVVVLDKVTDL). The helical transmembrane segment at 595–615 (LLFFGKLLVVGGVGVLSFFFF) threads the bilayer. Residues 616-635 (TGRIPSLGKTFENPQLNYYW) lie on the Extracellular side of the membrane. A helical membrane pass occupies residues 636–656 (LPIMVSILGAYLIASGFFSVF). The Cytoplasmic segment spans residues 657 to 707 (GMCVDTLFLCFLEDLERNDGSADRPYYMSKSLLKILGKKNKGTPGDKKRKK).

This sequence belongs to the CTL (choline transporter-like) family. Post-translationally, N-glycosylated; N-glycosylation of Asn-68 and Asn-391 is required for a proper thiamine pyrophosphate uptake.

The protein localises to the membrane. It localises to the apical cell membrane. It catalyses the reaction choline(out) + n H(+)(in) = choline(in) + n H(+)(out). The enzyme catalyses thiamine diphosphate(out) = thiamine diphosphate(in). In terms of biological role, choline transporter that plays a role in the choline-acetylcholine system and is required to the efferent innervation of hair cells in the olivocochlear bundle for the maintenance of physiological function of outer hair cells and the protection of hair cells from acoustic injury. Also described as a thiamine pyrophosphate transporter in colon, may mediate the absorption of microbiota-generated thiamine pyrophosphate and contribute to host thiamine (vitamin B1) homeostasis. In Bos taurus (Bovine), this protein is Choline transporter-like protein 4.